A 95-amino-acid polypeptide reads, in one-letter code: Integration host factor subunit beta (95 aa).

The protein belongs to the bacterial histone-like protein family. Heterodimer of an alpha and a beta chain.

In terms of biological role, this protein is one of the two subunits of integration host factor, a specific DNA-binding protein that functions in genetic recombination as well as in transcriptional and translational control. The sequence is that of Integration host factor subunit beta from Ruegeria sp. (strain TM1040) (Silicibacter sp.).